We begin with the raw amino-acid sequence, 551 residues long: High-affinity glucose transporter (551 aa).

Over 1–27 (MSLKNWLLLRDIQYEGTFYKKFPHVYN) the chain is Cytoplasmic. The chain crosses the membrane as a helical span at residues 28–48 (IYVIGFIACISGLMFGFDIAS). The Extracellular portion of the chain corresponds to 49 to 70 (MSSMIGTDVYKDYFSNPDSLTY). The helical transmembrane segment at 71 to 91 (GGITASMAGGSFLGSLISPNF) threads the bilayer. Over 92–98 (SDAFGRK) the chain is Cytoplasmic. The chain crosses the membrane as a helical span at residues 99-119 (VSLHICAALWIIGAILQCAAQ). Residues 120 to 123 (DQAM) are Extracellular-facing. Residues 124–144 (LIVGRVISGMGIGFGSSAAPV) form a helical membrane-spanning segment. The Cytoplasmic segment spans residues 145–155 (YCSEISPPKIR). The helical transmembrane segment at 156 to 176 (GTISGLFQFSVTVGIMVLFYI) threads the bilayer. At 177 to 190 (GYGCHFIDGAAAFR) the chain is on the extracellular side. Residues 191-211 (ITWGLQMVPGLILMVGVFFIP) traverse the membrane as a helical segment. Topologically, residues 212–289 (ESPRWLANHD…VGVSAQMWQQ (78 aa)) are cytoplasmic. The helical transmembrane segment at 290–310 (LCGMNVMMYYIVYIFNMAGYT) threads the bilayer. At 311–315 (GNTNL) the chain is on the extracellular side. The helical transmembrane segment at 316-336 (VASSIQYVLNVVMTIPALFLI) threads the bilayer. The Cytoplasmic portion of the chain corresponds to 337-343 (DKFGRRP). A helical membrane pass occupies residues 344–364 (VLIIGGIFMFTWLFSVAGILA). The Extracellular segment spans residues 365 to 395 (TYSVPAPGGVNGDDTVTIQIPSENTSAANGV). An N-linked (GlcNAc...) asparagine glycan is attached at Asn388. Residues 396–416 (IASSYLFVCFFAPTWGIGIWI) traverse the membrane as a helical segment. At 417 to 432 (YCSEIFNNMERAKGSA) the chain is on the cytoplasmic side. A helical transmembrane segment spans residues 433-453 (LSAATNWAFNFALAMFVPSAF). The Extracellular segment spans residues 454-459 (KNISWK). Residues 460 to 480 (TYIIFGVFSVALTIQTFFMFP) traverse the membrane as a helical segment. The Cytoplasmic segment spans residues 481-551 (ETKGKTLEEI…DRSDSASNSN (71 aa)).

It belongs to the major facilitator superfamily. Sugar transporter (TC 2.A.1.1) family.

The protein localises to the membrane. High-affinity glucose transporter. This Kluyveromyces lactis (strain ATCC 8585 / CBS 2359 / DSM 70799 / NBRC 1267 / NRRL Y-1140 / WM37) (Yeast) protein is High-affinity glucose transporter (HGT1).